A 319-amino-acid chain; its full sequence is MIKPTPAAVGSYVTRRCDRLFKSAAAAAGSTVVAAILLIAIFLLLRAVPSLRANHANFFTSAKFDTTGDKNLAFGIRDLFMVTVLSSICALVLAVPVAIGIAVFLTQYVPARLSRLFSAMVDLLAAVPSIIFGLWGVFVLAPKLQPIAVFLNHNLGWLFLFKQGNVSLAGGGTIFTSGIVLAVMILPIVTSVSREVFRHTPLIQIEAAQALGATKWEVVQMTVLPFGRSGVAAAAMLGLGRALGETLAVLIILRSAARSGNWSLFDGGYTFASKIASAASEFSQPLPTGAYIAAGFALFFLTFVVNAVARAISGGRVNG.

7 helical membrane passes run alanine 25–leucine 45, valine 84–phenylalanine 104, methionine 120–leucine 140, alanine 141–phenylalanine 161, alanine 169–valine 189, alanine 233–leucine 253, and glycine 289–alanine 309. The ABC transmembrane type-1 domain maps to phenylalanine 80 to alanine 309.

Belongs to the binding-protein-dependent transport system permease family. CysTW subfamily.

The protein resides in the cell membrane. Its function is as follows. Part of a binding-protein-dependent transport system for phosphate; probably responsible for the translocation of the substrate across the membrane. The polypeptide is Phosphate transport system permease protein PstC (pstC) (Mycobacterium leprae (strain TN)).